An 88-amino-acid polypeptide reads, in one-letter code: UPF0367 protein syc2447_c (88 aa).

This sequence belongs to the UPF0367 family.

The chain is UPF0367 protein syc2447_c from Synechococcus sp. (strain ATCC 27144 / PCC 6301 / SAUG 1402/1) (Anacystis nidulans).